The chain runs to 269 residues: NAD kinase (269 aa).

The active-site Proton acceptor is the Asp-45. NAD(+) is bound by residues 45-46 (DG), 122-123 (NE), Arg-149, Asp-151, and Ala-186.

It belongs to the NAD kinase family. A divalent metal cation serves as cofactor.

It is found in the cytoplasm. It catalyses the reaction NAD(+) + ATP = ADP + NADP(+) + H(+). Involved in the regulation of the intracellular balance of NAD and NADP, and is a key enzyme in the biosynthesis of NADP. Catalyzes specifically the phosphorylation on 2'-hydroxyl of the adenosine moiety of NAD to yield NADP. The chain is NAD kinase from Staphylococcus saprophyticus subsp. saprophyticus (strain ATCC 15305 / DSM 20229 / NCIMB 8711 / NCTC 7292 / S-41).